The following is a 345-amino-acid chain: Dihydroorotase (345 aa).

Zn(2+)-binding residues include His14 and His16. Substrate contacts are provided by residues 16-18 and Asn42; that span reads HLR. Positions 100, 137, and 175 each coordinate Zn(2+). Lys100 is modified (N6-carboxylysine). His137 lines the substrate pocket. Leu220 lines the substrate pocket. Asp248 contacts Zn(2+). Asp248 is a catalytic residue. Positions 252 and 264 each coordinate substrate.

The protein belongs to the metallo-dependent hydrolases superfamily. DHOase family. Class II DHOase subfamily. In terms of assembly, homodimer. Zn(2+) serves as cofactor.

It carries out the reaction (S)-dihydroorotate + H2O = N-carbamoyl-L-aspartate + H(+). It participates in pyrimidine metabolism; UMP biosynthesis via de novo pathway; (S)-dihydroorotate from bicarbonate: step 3/3. Its function is as follows. Catalyzes the reversible cyclization of carbamoyl aspartate to dihydroorotate. This chain is Dihydroorotase, found in Methylobacillus flagellatus (strain ATCC 51484 / DSM 6875 / VKM B-1610 / KT).